A 271-amino-acid chain; its full sequence is Nodulin-26 (271 aa).

2 helical membrane passes run 40–62 (LVAE…VVNE) and 72–94 (GIAI…ISGG). Residues 97–99 (NPA) carry the NPA 1 motif. 3 consecutive transmembrane segments (helical) span residues 115–137 (VPAY…RLLF), 152–174 (TNLQ…ICGV), and 181–203 (VGEF…GGPV). The NPA 2 motif lies at 209–211 (NPA). A helical membrane pass occupies residues 225-247 (GIWIYLLAPVVGAIAGAWVYNIV). At S262 the chain carries Phosphoserine; by CPK.

It belongs to the MIP/aquaporin (TC 1.A.8) family. NIP (TC 1.A.8.12) subfamily.

The protein resides in the symbiosome. Its subcellular location is the peribacteroid membrane. Aquaporins facilitate the transport of water and small neutral solutes across cell membranes. This aquaporin may function in transporting small molecules across the peribacteroid membranes. This is Nodulin-26 from Glycine max (Soybean).